A 216-amino-acid chain; its full sequence is ATP phosphoribosyltransferase (216 aa).

This sequence belongs to the ATP phosphoribosyltransferase family. Short subfamily. As to quaternary structure, heteromultimer composed of HisG and HisZ subunits.

The protein localises to the cytoplasm. It carries out the reaction 1-(5-phospho-beta-D-ribosyl)-ATP + diphosphate = 5-phospho-alpha-D-ribose 1-diphosphate + ATP. It participates in amino-acid biosynthesis; L-histidine biosynthesis; L-histidine from 5-phospho-alpha-D-ribose 1-diphosphate: step 1/9. In terms of biological role, catalyzes the condensation of ATP and 5-phosphoribose 1-diphosphate to form N'-(5'-phosphoribosyl)-ATP (PR-ATP). Has a crucial role in the pathway because the rate of histidine biosynthesis seems to be controlled primarily by regulation of HisG enzymatic activity. In Nitrosomonas eutropha (strain DSM 101675 / C91 / Nm57), this protein is ATP phosphoribosyltransferase.